The sequence spans 461 residues: METLFNGTLALAGRDQETTGFAWWAGNARLINLSGKLLGAHVAHAGLIVFWAGAMNLFEVAHFVPEKPMYEQGLILLPHLATLGWGVGPGGEVIDTFPYFVSGVLHLISSAVLGFGGIYHSLLGPETLEESFPFFGYVWKDRNKMTTILGIHLILLGIGAFLLVLKALYFGGVYDTWAPGGGDVRKITNLTLSPSVIFGYLLKSPFGGEGWIVSVDDLEDIIGGHVWLGSICIFGGIWHILTKPFAWARRALVWSGEAYLSYSLAALSIFGFTACCFVWFNNTAYPSEFYGPTGPEASQAQAFTFLVRDQRLGANVGSAQGPTGLGKYLMRSPTGEVIFGGETMRFWDLRAPWLEPLRGPNGLDLSRLKKDIQPWQERRSAEYMTHAPLGSLNSVGGVATEINAVNYVSPRSWLATSHFVLGFFLFVGHLWHAGRARAAAAGFEKGIDRDLEPVLFMTPLN.

A propeptide spanning residues 1-2 is cleaved from the precursor; that stretch reads ME. Thr3 carries the N-acetylthreonine modification. Thr3 carries the post-translational modification Phosphothreonine. A run of 5 helical transmembrane segments spans residues 57–81, 122–143, 166–188, 243–263, and 279–300; these read LFEVAHFVPEKPMYEQGLILLPHLA, LLGPETLEESFPFFGYVWKDRN, KALYFGGVYDTWAPGGGDVRKIT, KPFAWARRALVWSGEAYLSYS, and WFNNTAYPSEFYGPTGPEASQA. Glu355 contributes to the [CaMn4O5] cluster binding site. A helical membrane pass occupies residues 435–459; that stretch reads RARAAAAGFEKGIDRDLEPVLFMTP.

The protein belongs to the PsbB/PsbC family. PsbC subfamily. PSII is composed of 1 copy each of membrane proteins PsbA, PsbB, PsbC, PsbD, PsbE, PsbF, PsbH, PsbI, PsbJ, PsbK, PsbL, PsbM, PsbT, PsbX, PsbY, PsbZ, Psb30/Ycf12, at least 3 peripheral proteins of the oxygen-evolving complex and a large number of cofactors. It forms dimeric complexes. Binds multiple chlorophylls and provides some of the ligands for the Ca-4Mn-5O cluster of the oxygen-evolving complex. It may also provide a ligand for a Cl- that is required for oxygen evolution. PSII binds additional chlorophylls, carotenoids and specific lipids. is required as a cofactor.

It localises to the plastid. The protein localises to the chloroplast thylakoid membrane. One of the components of the core complex of photosystem II (PSII). It binds chlorophyll and helps catalyze the primary light-induced photochemical processes of PSII. PSII is a light-driven water:plastoquinone oxidoreductase, using light energy to abstract electrons from H(2)O, generating O(2) and a proton gradient subsequently used for ATP formation. This chain is Photosystem II CP43 reaction center protein, found in Nandina domestica (Heavenly bamboo).